A 298-amino-acid polypeptide reads, in one-letter code: Probable alpha-L-glutamate ligase (298 aa).

The 184-residue stretch at 104–287 folds into the ATP-grasp domain; that stretch reads MQLLSRHGIG…VAGKIIEFLE (184 aa). ATP contacts are provided by residues K141, 178–179, D187, and 211–213; these read EY and RSN. Residues D248, E260, and N262 each coordinate Mg(2+). Mn(2+)-binding residues include D248, E260, and N262.

Belongs to the RimK family. The cofactor is Mg(2+). It depends on Mn(2+) as a cofactor.

This chain is Probable alpha-L-glutamate ligase, found in Aeromonas salmonicida (strain A449).